A 380-amino-acid polypeptide reads, in one-letter code: tRNA(Met) cytidine acetate ligase (380 aa).

ATP is bound by residues 7 to 20 (IAEY…HLYQ), Gly101, Asn151, and Arg176.

Belongs to the TmcAL family.

It is found in the cytoplasm. The enzyme catalyses cytidine(34) in elongator tRNA(Met) + acetate + ATP = N(4)-acetylcytidine(34) in elongator tRNA(Met) + AMP + diphosphate. Its function is as follows. Catalyzes the formation of N(4)-acetylcytidine (ac(4)C) at the wobble position of elongator tRNA(Met), using acetate and ATP as substrates. First activates an acetate ion to form acetyladenylate (Ac-AMP) and then transfers the acetyl group to tRNA to form ac(4)C34. This is tRNA(Met) cytidine acetate ligase from Ligilactobacillus salivarius (strain UCC118) (Lactobacillus salivarius).